The following is a 449-amino-acid chain: MREIVHVQGGQCGNQIGAKFWEVISDEHGIDPTGTYCGDSDLQLERINVFYNEATGGRFVPRAILMDLEPGTMDSVRAGPFGQLFRPDNFVFGQTGAGNNWAKGHYTEGAELIDSVLDVVRKEAEGCDCLQGFQITHSLGGGTGSGMGTLLISKVREEYPDRIMETFSVFPSPKVSDTVVEPYNATLSVHQLVENADEVQVIDNEALYDICFRTLKLTTPTYGDLNHLVSAAMSGVTCCLRFPGQLNSDLRKLAVNLVPFPRLHFFLIGFAPLTSRGSQQYRALSVPELTQQMFDAKNMMCASDPRHGRYLTASAMFRGRMSTKEVDEQMLNVQNKNSSYFVEWIPNNMKSSVCDIPPKGLKMSVTFVGNSTAIQEMFKRVSDQFTAMFRRKAFLHWYTGEGMDEMEFTEAESNMNDLVSEYQQYQDATAEEEGEFDEEEGEMGAEEGA.

Gln-11, Glu-69, Ser-138, Gly-142, Thr-143, Gly-144, Asn-204, and Asn-226 together coordinate GTP. Glu-69 lines the Mg(2+) pocket. The disordered stretch occupies residues 426-449; the sequence is QDATAEEEGEFDEEEGEMGAEEGA. The segment covering 429-449 has biased composition (acidic residues); sequence TAEEEGEFDEEEGEMGAEEGA.

It belongs to the tubulin family. As to quaternary structure, dimer of alpha and beta chains. A typical microtubule is a hollow water-filled tube with an outer diameter of 25 nm and an inner diameter of 15 nM. Alpha-beta heterodimers associate head-to-tail to form protofilaments running lengthwise along the microtubule wall with the beta-tubulin subunit facing the microtubule plus end conferring a structural polarity. Microtubules usually have 13 protofilaments but different protofilament numbers can be found in some organisms and specialized cells. Requires Mg(2+) as cofactor.

It is found in the cytoplasm. The protein resides in the cytoskeleton. Functionally, tubulin is the major constituent of microtubules, a cylinder consisting of laterally associated linear protofilaments composed of alpha- and beta-tubulin heterodimers. Microtubules grow by the addition of GTP-tubulin dimers to the microtubule end, where a stabilizing cap forms. Below the cap, tubulin dimers are in GDP-bound state, owing to GTPase activity of alpha-tubulin. The polypeptide is Tubulin beta chain (Toxoplasma gondii).